The sequence spans 390 residues: Formate-dependent phosphoribosylglycinamide formyltransferase (390 aa).

N(1)-(5-phospho-beta-D-ribosyl)glycinamide is bound by residues Glu19–Leu20 and Glu79. ATP-binding positions include Arg111, Lys152, Ser157 to Gln162, Glu192 to Val195, and Glu200. Positions Arg116 to Leu305 constitute an ATP-grasp domain. The Mg(2+) site is built by Glu264 and Glu276. Residues Asp283, Lys353, and Arg360 to Arg361 contribute to the N(1)-(5-phospho-beta-D-ribosyl)glycinamide site.

The protein belongs to the PurK/PurT family. In terms of assembly, homodimer.

The catalysed reaction is N(1)-(5-phospho-beta-D-ribosyl)glycinamide + formate + ATP = N(2)-formyl-N(1)-(5-phospho-beta-D-ribosyl)glycinamide + ADP + phosphate + H(+). It participates in purine metabolism; IMP biosynthesis via de novo pathway; N(2)-formyl-N(1)-(5-phospho-D-ribosyl)glycinamide from N(1)-(5-phospho-D-ribosyl)glycinamide (formate route): step 1/1. Its function is as follows. Involved in the de novo purine biosynthesis. Catalyzes the transfer of formate to 5-phospho-ribosyl-glycinamide (GAR), producing 5-phospho-ribosyl-N-formylglycinamide (FGAR). Formate is provided by PurU via hydrolysis of 10-formyl-tetrahydrofolate. This is Formate-dependent phosphoribosylglycinamide formyltransferase from Marinobacter nauticus (strain ATCC 700491 / DSM 11845 / VT8) (Marinobacter aquaeolei).